The following is a 199-amino-acid chain: ATP-dependent Clp protease proteolytic subunit (199 aa).

Residue S97 is the Nucleophile of the active site. H122 is a catalytic residue.

It belongs to the peptidase S14 family. Fourteen ClpP subunits assemble into 2 heptameric rings which stack back to back to give a disk-like structure with a central cavity, resembling the structure of eukaryotic proteasomes.

It localises to the cytoplasm. The catalysed reaction is Hydrolysis of proteins to small peptides in the presence of ATP and magnesium. alpha-casein is the usual test substrate. In the absence of ATP, only oligopeptides shorter than five residues are hydrolyzed (such as succinyl-Leu-Tyr-|-NHMec, and Leu-Tyr-Leu-|-Tyr-Trp, in which cleavage of the -Tyr-|-Leu- and -Tyr-|-Trp bonds also occurs).. In terms of biological role, cleaves peptides in various proteins in a process that requires ATP hydrolysis. Has a chymotrypsin-like activity. Plays a major role in the degradation of misfolded proteins. This chain is ATP-dependent Clp protease proteolytic subunit, found in Citrifermentans bemidjiense (strain ATCC BAA-1014 / DSM 16622 / JCM 12645 / Bem) (Geobacter bemidjiensis).